Here is a 162-residue protein sequence, read N- to C-terminus: ATP synthase subunit b 1 (162 aa).

A helical membrane pass occupies residues 3 to 23 (FLDATFFAFVGLVLFLALVVY).

The protein belongs to the ATPase B chain family. In terms of assembly, F-type ATPases have 2 components, F(1) - the catalytic core - and F(0) - the membrane proton channel. F(1) has five subunits: alpha(3), beta(3), gamma(1), delta(1), epsilon(1). F(0) has three main subunits: a(1), b(2) and c(10-14). The alpha and beta chains form an alternating ring which encloses part of the gamma chain. F(1) is attached to F(0) by a central stalk formed by the gamma and epsilon chains, while a peripheral stalk is formed by the delta and b chains.

The protein localises to the cell inner membrane. Its function is as follows. F(1)F(0) ATP synthase produces ATP from ADP in the presence of a proton or sodium gradient. F-type ATPases consist of two structural domains, F(1) containing the extramembraneous catalytic core and F(0) containing the membrane proton channel, linked together by a central stalk and a peripheral stalk. During catalysis, ATP synthesis in the catalytic domain of F(1) is coupled via a rotary mechanism of the central stalk subunits to proton translocation. Component of the F(0) channel, it forms part of the peripheral stalk, linking F(1) to F(0). This is ATP synthase subunit b 1 from Rhizobium johnstonii (strain DSM 114642 / LMG 32736 / 3841) (Rhizobium leguminosarum bv. viciae).